The chain runs to 257 residues: Type III pantothenate kinase (257 aa).

7 to 14 is an ATP binding site; that stretch reads DIGNSHTV. 106-109 contributes to the substrate binding site; that stretch reads GTDR. Catalysis depends on Asp-108, which acts as the Proton acceptor. A K(+)-binding site is contributed by Asp-128. Thr-132 lines the ATP pocket. Position 184 (Thr-184) interacts with substrate.

Belongs to the type III pantothenate kinase family. In terms of assembly, homodimer. The cofactor is NH4(+). It depends on K(+) as a cofactor.

The protein localises to the cytoplasm. The catalysed reaction is (R)-pantothenate + ATP = (R)-4'-phosphopantothenate + ADP + H(+). The protein operates within cofactor biosynthesis; coenzyme A biosynthesis; CoA from (R)-pantothenate: step 1/5. Functionally, catalyzes the phosphorylation of pantothenate (Pan), the first step in CoA biosynthesis. In Nocardioides sp. (strain ATCC BAA-499 / JS614), this protein is Type III pantothenate kinase.